The chain runs to 673 residues: Methionine--tRNA ligase (673 aa).

The 'HIGH' region motif lies at 13–23 (PYANGSIHLGH). Residues Cys-144, Cys-147, Cys-157, and Cys-160 each coordinate Zn(2+). Positions 330-334 (KMSKS) match the 'KMSKS' region motif. Residue Lys-333 participates in ATP binding. The tRNA-binding domain maps to 572 to 673 (DFAQLDLRIA…GRARAGMTIS (102 aa)).

It belongs to the class-I aminoacyl-tRNA synthetase family. MetG type 1 subfamily. In terms of assembly, homodimer. Requires Zn(2+) as cofactor.

It is found in the cytoplasm. The enzyme catalyses tRNA(Met) + L-methionine + ATP = L-methionyl-tRNA(Met) + AMP + diphosphate. Functionally, is required not only for elongation of protein synthesis but also for the initiation of all mRNA translation through initiator tRNA(fMet) aminoacylation. In Dichelobacter nodosus (strain VCS1703A), this protein is Methionine--tRNA ligase.